The sequence spans 210 residues: MTKGILGRKIGMTQVFAENGELIPVTVIAANPNVVLQKKTTETDGYNAIQLGFEDKREKLTNKPEQGHTAKASTTPKRFIREIRDADVDGLEVGQEVKVEVFAAGEIVDVTGISKGKGFQGVIKRHGQSRGPMSHGSRYHRRPGSMGPVAPNRVFKGKKLAGRMGGDQVTIQNLEIVQVDTERNLLLVKGNVPGAKKSLVVVQGAVKVSK.

The interval 125–151 (RHGQSRGPMSHGSRYHRRPGSMGPVAP) is disordered.

The protein belongs to the universal ribosomal protein uL3 family. As to quaternary structure, part of the 50S ribosomal subunit. Forms a cluster with proteins L14 and L19.

Its function is as follows. One of the primary rRNA binding proteins, it binds directly near the 3'-end of the 23S rRNA, where it nucleates assembly of the 50S subunit. This chain is Large ribosomal subunit protein uL3, found in Bacillus mycoides (strain KBAB4) (Bacillus weihenstephanensis).